The chain runs to 195 residues: Large ribosomal subunit protein bL32m (195 aa).

The Zn(2+) site is built by Cys-95, Cys-98, Cys-108, and Cys-111.

Belongs to the bacterial ribosomal protein bL32 family. In terms of assembly, component of the mitochondrial large ribosomal subunit (mt-LSU).

The protein resides in the mitochondrion. In terms of biological role, component of the mitochondrial large ribosomal subunit (mt-LSU). The mitochondrial ribosome (mitoribosome) is a large ribonucleoprotein complex responsible for the synthesis of proteins inside mitochondria. The chain is Large ribosomal subunit protein bL32m (mRpL32) from Drosophila melanogaster (Fruit fly).